Reading from the N-terminus, the 407-residue chain is Polygalacturonase (407 aa).

Residues 1–26 (MAPHLNIVPSMFVLLLLFISASKVQP) form the signal peptide. PbH1 repeat units lie at residues 180–206 (CKNI…HMGK) and 207–228 (SEGV…SIGD). N-linked (GlcNAc...) asparagine glycosylation is present at N182. The active-site Proton donor is D221. The cysteines at positions 223 and 240 are disulfide-linked. Residue H244 is part of the active site. PbH1 repeat units follow at residues 260 to 281 (VEGI…RIKT) and 290 to 311 (VSEI…LIDQ). N267, N272, N302, and N331 each carry an N-linked (GlcNAc...) asparagine glycan. Disulfide bonds link C351/C357 and C379/C395. One copy of the PbH1 5 repeat lies at 357-384 (CQNVELADIDIQHNGAEPATSQCLNVKP).

Belongs to the glycosyl hydrolase 28 family. Pollen.

Its subcellular location is the secreted. The protein resides in the cell wall. The enzyme catalyses (1,4-alpha-D-galacturonosyl)n+m + H2O = (1,4-alpha-D-galacturonosyl)n + (1,4-alpha-D-galacturonosyl)m.. In terms of biological role, may function in the depolymerization of the pectin in its walls during pollen tube elongation, or in that of the pistil during pollination. The protein is Polygalacturonase (G9) of Gossypium barbadense (Sea Island cotton).